Here is a 544-residue protein sequence, read N- to C-terminus: CTP synthase (544 aa).

Residues 1-266 (MIRYIFITGG…DSEVLSHFGI (266 aa)) form an amidoligase domain region. Residue Ser13 coordinates CTP. Ser13 serves as a coordination point for UTP. Residues 14–19 (SLGKGI) and Asp71 contribute to the ATP site. 2 residues coordinate Mg(2+): Asp71 and Glu140. CTP is bound by residues 147-149 (DIE), 187-192 (KTKPTQ), and Lys223. UTP-binding positions include 187 to 192 (KTKPTQ) and Lys223. 239 to 241 (RDV) lines the ATP pocket. The 252-residue stretch at 292–543 (TIGLVGKYTD…IAAAVKQSRL (252 aa)) folds into the Glutamine amidotransferase type-1 domain. Gly355 contributes to the L-glutamine binding site. Cys382 (nucleophile; for glutamine hydrolysis) is an active-site residue. L-glutamine contacts are provided by residues 383-386 (YGMQ), Glu406, and Arg471. Catalysis depends on residues His516 and Glu518.

The protein belongs to the CTP synthase family. In terms of assembly, homotetramer.

It carries out the reaction UTP + L-glutamine + ATP + H2O = CTP + L-glutamate + ADP + phosphate + 2 H(+). It catalyses the reaction L-glutamine + H2O = L-glutamate + NH4(+). The catalysed reaction is UTP + NH4(+) + ATP = CTP + ADP + phosphate + 2 H(+). Its pathway is pyrimidine metabolism; CTP biosynthesis via de novo pathway; CTP from UDP: step 2/2. Its activity is regulated as follows. Allosterically activated by GTP, when glutamine is the substrate; GTP has no effect on the reaction when ammonia is the substrate. The allosteric effector GTP functions by stabilizing the protein conformation that binds the tetrahedral intermediate(s) formed during glutamine hydrolysis. Inhibited by the product CTP, via allosteric rather than competitive inhibition. In terms of biological role, catalyzes the ATP-dependent amination of UTP to CTP with either L-glutamine or ammonia as the source of nitrogen. Regulates intracellular CTP levels through interactions with the four ribonucleotide triphosphates. This is CTP synthase from Hyphomonas neptunium (strain ATCC 15444).